Here is a 275-residue protein sequence, read N- to C-terminus: Large ribosomal subunit protein uL2 (275 aa).

Residues 223 to 275 (VVMNPVDHPHGGGEGKSSGGRHPVSPWGMPTKGYKTRKNKGTDQYIVRRRNKK) are disordered.

This sequence belongs to the universal ribosomal protein uL2 family. Part of the 50S ribosomal subunit. Forms a bridge to the 30S subunit in the 70S ribosome.

One of the primary rRNA binding proteins. Required for association of the 30S and 50S subunits to form the 70S ribosome, for tRNA binding and peptide bond formation. It has been suggested to have peptidyltransferase activity; this is somewhat controversial. Makes several contacts with the 16S rRNA in the 70S ribosome. This Psychromonas ingrahamii (strain DSM 17664 / CCUG 51855 / 37) protein is Large ribosomal subunit protein uL2.